Here is a 733-residue protein sequence, read N- to C-terminus: Cyclic nucleotide-gated channel (733 aa).

Disordered regions lie at residues 1 to 33 (MSTA…PTAS) and 67 to 95 (PNGN…IEVP). Residues 1-125 (MSTAEPAPDP…PSTDNFYYWT (125 aa)) are Cytoplasmic-facing. The segment covering 12–25 (NPSTSGLAPTTNGI) has biased composition (polar residues). Residues 126–148 (CVVTVAYIYNLLFVIARQVFNDL) traverse the membrane as a helical segment. The Extracellular segment spans residues 149-197 (IGPSSQSLCRFYNGTLNSTTQVECTYNMLTNMKEMPTYSQYPDLGWSKY). A helical membrane pass occupies residues 198–217 (WHFRMLWVFFDLLMDCVYLI). Over 218–251 (DTFLNYRMGYMDQGLVVREAEKVTKAYWQSKQYR) the chain is Cytoplasmic. The chain crosses the membrane as a helical span at residues 252-265 (IDGISLIPLDYILG). The Extracellular portion of the chain corresponds to 266 to 276 (WPIPYINWRGL). A helical transmembrane segment spans residues 277-287 (PILRLNRLIRY). The Cytoplasmic portion of the chain corresponds to 288-308 (KRVRNCLERTETRSSMPNAFR). A helical transmembrane segment spans residues 309 to 331 (VVVVVWYIVIIIHWNACLYFWIS). Residues 332–362 (EWIGLGTDAWVYGHLNKQSLPDDITDTLLRR) lie on the Extracellular side of the membrane. The next 2 membrane-spanning stretches (helical) occupy residues 363–385 (YVYS…SPVR) and 386–411 (NIEY…GNVG). A selectivity filter region spans residues 376–379 (TIGE). A Na(+)-binding site is contributed by glutamate 379. Topologically, residues 412 to 733 (SMISNMSAAR…TGTESESLLK (322 aa)) are cytoplasmic. The tract at residues 419-496 (AARTEFQNKM…TLRKVRIFQD (78 aa)) is C-linker. A cyclic nucleotide-binding domain region spans residues 493 to 607 (IFQDCEAGLL…ALREYPDARK (115 aa)). A 3',5'-cyclic GMP-binding site is contributed by glycine 559. Position 560 (glutamate 560) interacts with 3',5'-cyclic AMP. 5 residues coordinate 3',5'-cyclic GMP: serine 562, arginine 575, threonine 576, lysine 619, and aspartate 620. 3',5'-cyclic AMP is bound at residue arginine 575. Residues 694 to 733 (SIDGGDISTDGVDERVRPPRLRQTKTIDLPTGTESESLLK) form a disordered region.

It belongs to the cyclic nucleotide-gated cation channel (TC 1.A.1.5) family. Homotetramer. Expressed at the sensory endings of thermosensory, gustatory, and olfactory neurons.

Its subcellular location is the cell membrane. It localises to the cell projection. The protein resides in the cilium. The catalysed reaction is Ca(2+)(in) = Ca(2+)(out). The enzyme catalyses Na(+)(in) = Na(+)(out). It catalyses the reaction K(+)(in) = K(+)(out). Its function is as follows. Pore-forming subunit of the cyclic nucleotide-gated channel. Required for normal thermosensation and chemosensation sensory behavior. Required, downstream of receptor-type guanylate cyclase gcy-9, for CO2-mediated responses in BAG neurons. Required, downstream of receptor-type guanylate cyclase gcy-14, for alkaline pH-mediated responses in ASE-left (ASEL) neurons. Involved in the development of ASJ sensory neuron axon during late larval stages and in the maintenance of normal axon morphology in the adult. Regulates dauer formation. Required for the calcium flux to the cytoplasm in the ASJ sensory neurons upon the onset and removal of a nitric oxide (NO) stimulus, thereby promoting the ASJ-mediated behavioral avoidance response to NO-producing organisms like P.aeruginosa. In ASI and ASJ sensory neurons, controls behavioral response to P.aeruginosa by up-regulating the transcription of daf-7, a member of the TGF-beta family. In AWB and AWC sensory neurons, mediates the recognition of food odors which subsequently allows for the detection of preferred food sources. In AWC neurons, acts to promote expression of srsx-3, a member of the GPCR family. Binding to cGMP results in conformational changes at the hydrophobic gate that converts the protein from an inactive closed state to an active open state. The polypeptide is Cyclic nucleotide-gated channel (tax-4) (Caenorhabditis elegans).